A 398-amino-acid polypeptide reads, in one-letter code: 1-deoxy-D-xylulose 5-phosphate reductoisomerase (398 aa).

Residues Thr-11, Gly-12, Ser-13, Ile-14, Arg-38, Asn-39, and Asn-125 each coordinate NADPH. Lys-126 provides a ligand contact to 1-deoxy-D-xylulose 5-phosphate. Glu-127 lines the NADPH pocket. Position 151 (Asp-151) interacts with Mn(2+). Residues Ser-152, Glu-153, Ser-179, and His-202 each coordinate 1-deoxy-D-xylulose 5-phosphate. Residue Glu-153 coordinates Mn(2+). Gly-208 serves as a coordination point for NADPH. 1-deoxy-D-xylulose 5-phosphate-binding residues include Ser-215, Asn-220, Lys-221, and Glu-224. A Mn(2+)-binding site is contributed by Glu-224.

It belongs to the DXR family. It depends on Mg(2+) as a cofactor. Mn(2+) is required as a cofactor.

It catalyses the reaction 2-C-methyl-D-erythritol 4-phosphate + NADP(+) = 1-deoxy-D-xylulose 5-phosphate + NADPH + H(+). It participates in isoprenoid biosynthesis; isopentenyl diphosphate biosynthesis via DXP pathway; isopentenyl diphosphate from 1-deoxy-D-xylulose 5-phosphate: step 1/6. In terms of biological role, catalyzes the NADPH-dependent rearrangement and reduction of 1-deoxy-D-xylulose-5-phosphate (DXP) to 2-C-methyl-D-erythritol 4-phosphate (MEP). In Burkholderia multivorans (strain ATCC 17616 / 249), this protein is 1-deoxy-D-xylulose 5-phosphate reductoisomerase.